The primary structure comprises 400 residues: Bifunctional arginine demethylase and lysyl-hydroxylase psr-1 (400 aa).

One can recognise a JmjC domain in the interval 146–310; it reads RKTKKLSEDY…LVWPKTVKGR (165 aa). Residue T189 coordinates substrate. H192 and D194 together coordinate Fe cation. Residue N202 participates in 2-oxoglutarate binding. Position 209 (K209) interacts with substrate. H278 provides a ligand contact to Fe cation. T290 is a binding site for 2-oxoglutarate. The segment at 342–400 is disordered; it reads DMNESSSDSSSSSSSSDDSSDESDCDDSGRCGGRKRKNDDRSNECPEKMSTTYFQNSLV. The span at 346–358 shows a compositional bias: low complexity; sequence SSSDSSSSSSSSD. Residues 378 to 388 show a composition bias toward basic and acidic residues; it reads KNDDRSNECPE. The segment covering 390–400 has biased composition (polar residues); it reads MSTTYFQNSLV.

Belongs to the JMJD6 family. In terms of assembly, interacts with ced-5 and ced-12. It depends on Fe(2+) as a cofactor.

The protein localises to the nucleus. Functionally, dioxygenase that can both act as a histone arginine demethylase and a lysyl-hydroxylase. This chain is Bifunctional arginine demethylase and lysyl-hydroxylase psr-1 (psr-1), found in Caenorhabditis elegans.